Reading from the N-terminus, the 765-residue chain is 5-methyltetrahydropteroyltriglutamate--homocysteine methyltransferase 1 (765 aa).

Residues Lys-18 and Asn-116 each coordinate 5-methyltetrahydropteroyltri-L-glutamate. 437–439 (IGS) contributes to the L-homocysteine binding site. L-methionine is bound by residues 437–439 (IGS) and Glu-490. Residues 521–522 (RC) and Trp-567 contribute to the 5-methyltetrahydropteroyltri-L-glutamate site. Residue Asp-605 coordinates L-homocysteine. Asp-605 contributes to the L-methionine binding site. The Zn(2+) site is built by His-647, Cys-649, His-658, Asp-662, and Glu-671. The active-site Proton donor is the His-701. Cys-733 is a Zn(2+) binding site.

Belongs to the vitamin-B12 independent methionine synthase family. The cofactor is Zn(2+). In terms of tissue distribution, expressed in leaves, stems, flowers, siliques and seeds.

The protein resides in the cytoplasm. It is found in the cytosol. It catalyses the reaction 5-methyltetrahydropteroyltri-L-glutamate + L-homocysteine = tetrahydropteroyltri-L-glutamate + L-methionine. It participates in amino-acid biosynthesis; L-methionine biosynthesis via de novo pathway; L-methionine from L-homocysteine (MetE route): step 1/1. Its function is as follows. Catalyzes the transfer of a methyl group from 5-methyltetrahydrofolate to homocysteine resulting in methionine formation. This is 5-methyltetrahydropteroyltriglutamate--homocysteine methyltransferase 1 (MS1) from Arabidopsis thaliana (Mouse-ear cress).